We begin with the raw amino-acid sequence, 599 residues long: Elongation factor 4 (599 aa).

Residues 2–184 (KNIRNFSIIA…RLVRDIPPPE (183 aa)) enclose the tr-type G domain. Residues 14–19 (DHGKST) and 131–134 (NKID) contribute to the GTP site.

The protein belongs to the TRAFAC class translation factor GTPase superfamily. Classic translation factor GTPase family. LepA subfamily.

Its subcellular location is the cell inner membrane. It catalyses the reaction GTP + H2O = GDP + phosphate + H(+). In terms of biological role, required for accurate and efficient protein synthesis under certain stress conditions. May act as a fidelity factor of the translation reaction, by catalyzing a one-codon backward translocation of tRNAs on improperly translocated ribosomes. Back-translocation proceeds from a post-translocation (POST) complex to a pre-translocation (PRE) complex, thus giving elongation factor G a second chance to translocate the tRNAs correctly. Binds to ribosomes in a GTP-dependent manner. This chain is Elongation factor 4, found in Citrobacter koseri (strain ATCC BAA-895 / CDC 4225-83 / SGSC4696).